The primary structure comprises 456 residues: uncharacterized protein (456 aa).

Residues 3–61 enclose the TRAM domain; sequence TIKKNEVKTGKVIDLTHEGHGVVKVDRYPIFIPNALIDEEIKFKLIKVKKNFAIGKLIE. [4Fe-4S] cluster is bound by residues cysteine 74, cysteine 80, cysteine 83, and cysteine 162. S-adenosyl-L-methionine is bound by residues glutamine 286, tyrosine 315, glutamate 336, and aspartate 384. Cysteine 411 functions as the Nucleophile in the catalytic mechanism.

The protein belongs to the class I-like SAM-binding methyltransferase superfamily. RNA M5U methyltransferase family.

This is an uncharacterized protein from Staphylococcus epidermidis (strain ATCC 35984 / DSM 28319 / BCRC 17069 / CCUG 31568 / BM 3577 / RP62A).